Reading from the N-terminus, the 253-residue chain is Endonuclease NucS (253 aa).

The protein belongs to the NucS endonuclease family.

It localises to the cytoplasm. Cleaves both 3' and 5' ssDNA extremities of branched DNA structures. The polypeptide is Endonuclease NucS (Pyrococcus horikoshii (strain ATCC 700860 / DSM 12428 / JCM 9974 / NBRC 100139 / OT-3)).